Consider the following 517-residue polypeptide: ATP synthase subunit beta (517 aa).

2 stretches are compositionally biased toward low complexity: residues 1–22 (MAKA…AAKA) and 29–42 (AKTA…APKA). The disordered stretch occupies residues 1–42 (MAKAATPKTTAAAEAKPAAAKAPAKKAPAKTAAAKSDAAPKA). ATP is bound at residue 195 to 202 (GGAGVGKT).

The protein belongs to the ATPase alpha/beta chains family. As to quaternary structure, F-type ATPases have 2 components, CF(1) - the catalytic core - and CF(0) - the membrane proton channel. CF(1) has five subunits: alpha(3), beta(3), gamma(1), delta(1), epsilon(1). CF(0) has three main subunits: a(1), b(2) and c(9-12). The alpha and beta chains form an alternating ring which encloses part of the gamma chain. CF(1) is attached to CF(0) by a central stalk formed by the gamma and epsilon chains, while a peripheral stalk is formed by the delta and b chains.

It is found in the cell inner membrane. It carries out the reaction ATP + H2O + 4 H(+)(in) = ADP + phosphate + 5 H(+)(out). Produces ATP from ADP in the presence of a proton gradient across the membrane. The catalytic sites are hosted primarily by the beta subunits. This is ATP synthase subunit beta from Brucella anthropi (strain ATCC 49188 / DSM 6882 / CCUG 24695 / JCM 21032 / LMG 3331 / NBRC 15819 / NCTC 12168 / Alc 37) (Ochrobactrum anthropi).